The following is a 355-amino-acid chain: UDP-N-acetylglucosamine--N-acetylmuramyl-(pentapeptide) pyrophosphoryl-undecaprenol N-acetylglucosamine transferase (355 aa).

UDP-N-acetyl-alpha-D-glucosamine-binding positions include 14 to 16 (TGG), Asn126, Arg162, Ser190, Ile243, 262 to 267 (ALTVSE), and Gln287.

The protein belongs to the glycosyltransferase 28 family. MurG subfamily.

It localises to the cell inner membrane. It carries out the reaction di-trans,octa-cis-undecaprenyl diphospho-N-acetyl-alpha-D-muramoyl-L-alanyl-D-glutamyl-meso-2,6-diaminopimeloyl-D-alanyl-D-alanine + UDP-N-acetyl-alpha-D-glucosamine = di-trans,octa-cis-undecaprenyl diphospho-[N-acetyl-alpha-D-glucosaminyl-(1-&gt;4)]-N-acetyl-alpha-D-muramoyl-L-alanyl-D-glutamyl-meso-2,6-diaminopimeloyl-D-alanyl-D-alanine + UDP + H(+). The protein operates within cell wall biogenesis; peptidoglycan biosynthesis. Functionally, cell wall formation. Catalyzes the transfer of a GlcNAc subunit on undecaprenyl-pyrophosphoryl-MurNAc-pentapeptide (lipid intermediate I) to form undecaprenyl-pyrophosphoryl-MurNAc-(pentapeptide)GlcNAc (lipid intermediate II). The chain is UDP-N-acetylglucosamine--N-acetylmuramyl-(pentapeptide) pyrophosphoryl-undecaprenol N-acetylglucosamine transferase from Vibrio vulnificus (strain YJ016).